We begin with the raw amino-acid sequence, 290 residues long: Elongation factor Ts (290 aa).

The segment at 80 to 83 is involved in Mg(2+) ion dislocation from EF-Tu; that stretch reads TDFV.

The protein belongs to the EF-Ts family.

It localises to the cytoplasm. Its function is as follows. Associates with the EF-Tu.GDP complex and induces the exchange of GDP to GTP. It remains bound to the aminoacyl-tRNA.EF-Tu.GTP complex up to the GTP hydrolysis stage on the ribosome. The polypeptide is Elongation factor Ts (Neorickettsia sennetsu (strain ATCC VR-367 / Miyayama) (Ehrlichia sennetsu)).